A 261-amino-acid polypeptide reads, in one-letter code: tRNA pseudouridine synthase A (261 aa).

Asp51 (nucleophile) is an active-site residue. Residue Tyr109 coordinates substrate.

This sequence belongs to the tRNA pseudouridine synthase TruA family. Homodimer.

It carries out the reaction uridine(38/39/40) in tRNA = pseudouridine(38/39/40) in tRNA. Its function is as follows. Formation of pseudouridine at positions 38, 39 and 40 in the anticodon stem and loop of transfer RNAs. In Shewanella baltica (strain OS195), this protein is tRNA pseudouridine synthase A.